Here is a 430-residue protein sequence, read N- to C-terminus: Tol-Pal system protein TolB (430 aa).

A signal peptide spans 1-21 (MKQAFRVALSVLMLFVAVAHA).

Belongs to the TolB family. The Tol-Pal system is composed of five core proteins: the inner membrane proteins TolA, TolQ and TolR, the periplasmic protein TolB and the outer membrane protein Pal. They form a network linking the inner and outer membranes and the peptidoglycan layer.

The protein resides in the periplasm. Its function is as follows. Part of the Tol-Pal system, which plays a role in outer membrane invagination during cell division and is important for maintaining outer membrane integrity. TolB occupies a key intermediary position in the Tol-Pal system because it communicates directly with both membrane-embedded components, Pal in the outer membrane and TolA in the inner membrane. This chain is Tol-Pal system protein TolB, found in Erwinia tasmaniensis (strain DSM 17950 / CFBP 7177 / CIP 109463 / NCPPB 4357 / Et1/99).